The sequence spans 621 residues: MDYQTLLQNQLLSSNNIDYLVELIISNFRISKKATIKCINIITNNLSTYLNNIDRFPENNNELVDAINFLNNKCIEDFAIYLTNKYPNTNIFRNSSNQSSQSNQVNQSNQSSPSSQISPSSQVNKFNQSSQINQSNQINQSNQINQSNQLNHHSEEFQEFIILTEQEKNHLLKTHGINSLTTDKKKYKKTIEDDVITILSNPIMMQMFGLMLNQSSQPKKPDIIFDQILDSKQVIELKNQFQNKSVVSKSTESKTNLGSNTNIIINSKINHETDNKFSNKPNGNNDETNDKTNNETNDETNDETDNDDEIDNNIDLNVKLDNITTSDVPVILDKLRNLKILRETYVNKGNKKIANKIQNKIIQIVETLNAYKNKQSQIAIEAKNKIKHITVSNKEVSENIELIELEFNPNCDLEMLTENNYINLKNLFIKKIPDRKITDITLVEYLLPNNDYNITKFNNKFKIYSNSRLYSIDIPPSKYEINTLLSYIKNQLQFIDFQINDDNIISIKSQTDFELIVDRIEETVFPILGFNGKQSDYKDKSEYIATKSYNLNSKVYFSLQGVAMEPIEVIMGTKISYNKSIKKSSAGITIKNLVLNFKTELDQFYDFNDTFKMSLSITYQS.

2 disordered regions span residues 92–134 (FRNS…QINQ) and 268–310 (KINH…DDEI). Positions 94 to 134 (NSSNQSSQSNQVNQSNQSSPSSQISPSSQVNKFNQSSQINQ) are enriched in low complexity. Over residues 296-310 (TNDETNDETDNDDEI) the composition is skewed to acidic residues. Residues 354 to 401 (ANKIQNKIIQIVETLNAYKNKQSQIAIEAKNKIKHITVSNKEVSENIE) are a coiled coil.

This is an uncharacterized protein from Acanthamoeba polyphaga mimivirus (APMV).